Reading from the N-terminus, the 173-residue chain is Ribosome maturation factor RimM (173 aa).

Residues 92–165 (EGEFYHADLI…RVVIEAPAEI (74 aa)) enclose the PRC barrel domain.

The protein belongs to the RimM family. Binds ribosomal protein uS19.

The protein localises to the cytoplasm. Its function is as follows. An accessory protein needed during the final step in the assembly of 30S ribosomal subunit, possibly for assembly of the head region. Essential for efficient processing of 16S rRNA. May be needed both before and after RbfA during the maturation of 16S rRNA. It has affinity for free ribosomal 30S subunits but not for 70S ribosomes. In Nitrobacter winogradskyi (strain ATCC 25391 / DSM 10237 / CIP 104748 / NCIMB 11846 / Nb-255), this protein is Ribosome maturation factor RimM.